The primary structure comprises 735 residues: Peroxisomal multifunctional enzyme type 2 (735 aa).

Residues 1–305 form a (3R)-hydroxyacyl-CoA dehydrogenase region; sequence MASPLRFDGR…IEVLHKIDSE (305 aa). Residues 16-40, Leu-21, and Asp-40 each bind NAD(+); that span reads GAGG…VVND. Lys-46 carries the post-translational modification N6-acetyllysine; alternate. Lys-46 carries the post-translational modification N6-succinyllysine; alternate. A Phosphoserine modification is found at Ser-52. N6-succinyllysine occurs at positions 57 and 68. 75–76 is a binding site for NAD(+); the sequence is SV. Residue Lys-84 is modified to N6-succinyllysine. Asn-99 is an NAD(+) binding site. Ser-151 contacts substrate. Tyr-164 functions as the Proton acceptor in the catalytic mechanism. NAD(+) is bound by residues 164–168 and 196–199; these read YSAAK and AGSR. At Thr-265 the chain carries Phosphothreonine. Position 275 is an N6-succinyllysine (Lys-275). Residues Ser-304 and Ser-308 each carry the phosphoserine modification. Residues 321–621 are enoyl-CoA hydratase 2; sequence SGFAGVVGHK…AQTPSEGGAL (301 aa). Lys-355 is modified (N6-succinyllysine). 405 to 406 contributes to the (3R)-3-hydroxydecanoyl-CoA binding site; that stretch reads HG. Lys-423 carries the N6-succinyllysine modification. (3R)-3-hydroxydecanoyl-CoA is bound by residues Lys-434, 509–514, Gly-532, and Phe-562; that span reads DSNPLH. In terms of domain architecture, MaoC-like spans 483–599; sequence VPSRPPDAVL…QETGDIVISN (117 aa). An N6-acetyllysine modification is found at Lys-564. Residues Lys-578 and Lys-662 each carry the N6-succinyllysine modification. Residues 623–735 enclose the SCP2 domain; it reads SALVFGEIGR…QMILKDYAKL (113 aa). Lys-668 is modified (N6-acetyllysine). Substrate is bound by residues Gln-705 and Gln-723. Lys-724 is subject to N6-succinyllysine. The Microbody targeting signal motif lies at 733–735; the sequence is AKL.

It belongs to the short-chain dehydrogenases/reductases (SDR) family. Homodimer.

It is found in the peroxisome. It catalyses the reaction a (3R)-3-hydroxyacyl-CoA + NAD(+) = a 3-oxoacyl-CoA + NADH + H(+). The enzyme catalyses (24R,25R)-3alpha,7alpha,12alpha,24-tetrahydroxy-5beta-cholestan-26-oyl-CoA = (24E)-3alpha,7alpha,12alpha-trihydroxy-5beta-cholest-24-en-26-oyl-CoA + H2O. It carries out the reaction a (3R)-3-hydroxyacyl-CoA = a (2E)-enoyl-CoA + H2O. The catalysed reaction is (2E)-octenoyl-CoA + H2O = (3R)-hydroxyoctanoyl-CoA. It catalyses the reaction (3R)-hydroxyoctanoyl-CoA + NAD(+) = 3-oxooctanoyl-CoA + NADH + H(+). The enzyme catalyses (3R)-hydroxyhexadecanoyl-CoA + NAD(+) = 3-oxohexadecanoyl-CoA + NADH + H(+). It carries out the reaction (2E)-hexadecenedioyl-CoA + H2O = (3R)-hydroxyhexadecanedioyl-CoA. The catalysed reaction is (3R)-hydroxyhexadecanedioyl-CoA + NAD(+) = 3-oxohexadecanedioyl-CoA + NADH + H(+). It catalyses the reaction (3R)-hydroxyhexadecanoyl-CoA = (2E)-hexadecenoyl-CoA + H2O. The enzyme catalyses (3R)-3-hydroxydecanoyl-CoA = (2E)-decenoyl-CoA + H2O. It carries out the reaction (3R)-3-hydroxydecanoyl-CoA + NAD(+) = 3-oxodecanoyl-CoA + NADH + H(+). The catalysed reaction is (24R,25R)-3alpha,7alpha,12alpha,24-tetrahydroxy-5beta-cholestan-26-oyl-CoA + NAD(+) = 3alpha,7alpha,12alpha-trihydroxy-24-oxo-5beta-cholestan-26-oyl-CoA + NADH + H(+). It functions in the pathway lipid metabolism; fatty acid beta-oxidation. Functionally, bifunctional enzyme acting on the peroxisomal fatty acid beta-oxidation pathway. Catalyzes two of the four reactions in fatty acid degradation: hydration of 2-enoyl-CoA (trans-2-enoyl-CoA) to produce (3R)-3-hydroxyacyl-CoA, and dehydrogenation of (3R)-3-hydroxyacyl-CoA to produce 3-ketoacyl-CoA (3-oxoacyl-CoA), which is further metabolized by SCPx. Can use straight-chain and branched-chain fatty acids, as well as bile acid intermediates as substrates. This chain is Peroxisomal multifunctional enzyme type 2, found in Rattus norvegicus (Rat).